A 134-amino-acid polypeptide reads, in one-letter code: UPF0412 protein YaaI (134 aa).

The N-terminal stretch at 1-23 (MRSVLTISASLLFGLALSSVAHA) is a signal peptide.

The protein belongs to the UPF0412 family.

In Salmonella paratyphi B (strain ATCC BAA-1250 / SPB7), this protein is UPF0412 protein YaaI.